The chain runs to 394 residues: Putative 8-amino-7-oxononanoate synthase (394 aa).

Arginine 21 is a substrate binding site. Pyridoxal 5'-phosphate is bound at residue 107–108; the sequence is GY. Histidine 132 serves as a coordination point for substrate. Pyridoxal 5'-phosphate-binding positions include serine 180, 205–208, and 236–239; these read DEAH and TLSK. Lysine 239 bears the N6-(pyridoxal phosphate)lysine mark. Threonine 361 is a binding site for substrate.

This sequence belongs to the class-II pyridoxal-phosphate-dependent aminotransferase family. BioF subfamily. Homodimer. The cofactor is pyridoxal 5'-phosphate.

It carries out the reaction 6-carboxyhexanoyl-[ACP] + L-alanine + H(+) = (8S)-8-amino-7-oxononanoate + holo-[ACP] + CO2. The protein operates within cofactor biosynthesis; biotin biosynthesis. Its function is as follows. Catalyzes the decarboxylative condensation of pimeloyl-[acyl-carrier protein] and L-alanine to produce 8-amino-7-oxononanoate (AON), [acyl-carrier protein], and carbon dioxide. The sequence is that of Putative 8-amino-7-oxononanoate synthase (bioF) from Acaryochloris marina (strain MBIC 11017).